The following is a 254-amino-acid chain: ATP-dependent L-serine kinase SbnI (254 aa).

Glutamate 20 is a catalytic residue. Residue serine 33 coordinates ADP. Isoleucine 57 lines the O-phospho-L-serine pocket. ADP contacts are provided by aspartate 58, glycine 59, histidine 61, and arginine 62. The O-phospho-L-serine site is built by glycine 59 and histidine 61. O-phospho-L-serine is bound by residues tryptophan 98 and arginine 229.

In terms of assembly, forms dimers and tetramers in solution. Predominantly forms dimers. Dimerization/oligomerization is not essential for kinase activity.

It catalyses the reaction L-serine + ATP = O-phospho-L-serine + ADP + H(+). It functions in the pathway siderophore biosynthesis. Its activity is regulated as follows. Binds heme and heme binding inhibits DNA binding. Functionally, free serine kinase that uses ATP to phosphorylate L-serine to yield O-phospho-L-serine and ADP. O-phospho-L-serine serves as a substrate for SbnA and is a precursor for staphyloferrin B biosynthesis. Is also a DNA-binding regulatory protein that senses heme to control gene expression for siderophore biosynthesis. Binds to DNA within the sbnC coding region and is required for expression of genes in the sbn operon from sbnD onward. The chain is ATP-dependent L-serine kinase SbnI from Staphylococcus aureus (strain NCTC 8325 / PS 47).